A 431-amino-acid chain; its full sequence is Adenylosuccinate synthetase (431 aa).

GTP-binding positions include 12–18 (GDEGKGK) and 40–42 (GHT). D13 acts as the Proton acceptor in catalysis. Mg(2+) contacts are provided by D13 and G40. IMP-binding positions include 13-16 (DEGK), 38-41 (NAGH), T130, R144, Q225, T240, and R304. H41 functions as the Proton donor in the catalytic mechanism. 300-306 (STTGRPR) contributes to the substrate binding site. Residues R306, 332 to 334 (KMD), and 414 to 416 (SIG) contribute to the GTP site.

The protein belongs to the adenylosuccinate synthetase family. Homodimer. Requires Mg(2+) as cofactor.

Its subcellular location is the cytoplasm. The enzyme catalyses IMP + L-aspartate + GTP = N(6)-(1,2-dicarboxyethyl)-AMP + GDP + phosphate + 2 H(+). It functions in the pathway purine metabolism; AMP biosynthesis via de novo pathway; AMP from IMP: step 1/2. In terms of biological role, plays an important role in the de novo pathway of purine nucleotide biosynthesis. Catalyzes the first committed step in the biosynthesis of AMP from IMP. The sequence is that of Adenylosuccinate synthetase from Syntrophotalea carbinolica (strain DSM 2380 / NBRC 103641 / GraBd1) (Pelobacter carbinolicus).